The following is a 273-amino-acid chain: Formamidopyrimidine-DNA glycosylase (273 aa).

Pro-2 acts as the Schiff-base intermediate with DNA in catalysis. The active-site Proton donor is the Glu-3. Residue Lys-58 is the Proton donor; for beta-elimination activity of the active site. The DNA site is built by His-91 and Arg-110. The FPG-type zinc finger occupies Gln-238–Lys-272. Residue Arg-262 is the Proton donor; for delta-elimination activity of the active site.

The protein belongs to the FPG family. As to quaternary structure, monomer. Requires Zn(2+) as cofactor.

The catalysed reaction is Hydrolysis of DNA containing ring-opened 7-methylguanine residues, releasing 2,6-diamino-4-hydroxy-5-(N-methyl)formamidopyrimidine.. It catalyses the reaction 2'-deoxyribonucleotide-(2'-deoxyribose 5'-phosphate)-2'-deoxyribonucleotide-DNA = a 3'-end 2'-deoxyribonucleotide-(2,3-dehydro-2,3-deoxyribose 5'-phosphate)-DNA + a 5'-end 5'-phospho-2'-deoxyribonucleoside-DNA + H(+). Involved in base excision repair of DNA damaged by oxidation or by mutagenic agents. Acts as a DNA glycosylase that recognizes and removes damaged bases. Has a preference for oxidized purines, such as 7,8-dihydro-8-oxoguanine (8-oxoG). Has AP (apurinic/apyrimidinic) lyase activity and introduces nicks in the DNA strand. Cleaves the DNA backbone by beta-delta elimination to generate a single-strand break at the site of the removed base with both 3'- and 5'-phosphates. In Streptococcus thermophilus (strain ATCC BAA-250 / LMG 18311), this protein is Formamidopyrimidine-DNA glycosylase.